Reading from the N-terminus, the 185-residue chain is Peptidyl-tRNA hydrolase (185 aa).

Tyr-14 contributes to the tRNA binding site. His-19 (proton acceptor) is an active-site residue. Residues Phe-64, Asn-66, and Asn-112 each contribute to the tRNA site.

Belongs to the PTH family. As to quaternary structure, monomer.

It localises to the cytoplasm. It carries out the reaction an N-acyl-L-alpha-aminoacyl-tRNA + H2O = an N-acyl-L-amino acid + a tRNA + H(+). Its function is as follows. Hydrolyzes ribosome-free peptidyl-tRNAs (with 1 or more amino acids incorporated), which drop off the ribosome during protein synthesis, or as a result of ribosome stalling. In terms of biological role, catalyzes the release of premature peptidyl moieties from peptidyl-tRNA molecules trapped in stalled 50S ribosomal subunits, and thus maintains levels of free tRNAs and 50S ribosomes. This chain is Peptidyl-tRNA hydrolase, found in Halalkalibacterium halodurans (strain ATCC BAA-125 / DSM 18197 / FERM 7344 / JCM 9153 / C-125) (Bacillus halodurans).